The sequence spans 511 residues: 2-isopropylmalate synthase (511 aa).

The 263-residue stretch at 5–267 (LFIFDTTLRD…DTRIDATQIV (263 aa)) folds into the Pyruvate carboxyltransferase domain. Mn(2+) contacts are provided by aspartate 14, histidine 202, histidine 204, and asparagine 238. The interval 393–511 (KLLSMKVCSE…SKRERAHPQV (119 aa)) is regulatory domain.

It belongs to the alpha-IPM synthase/homocitrate synthase family. LeuA type 1 subfamily. Homodimer. The cofactor is Mn(2+).

It is found in the cytoplasm. It catalyses the reaction 3-methyl-2-oxobutanoate + acetyl-CoA + H2O = (2S)-2-isopropylmalate + CoA + H(+). Its pathway is amino-acid biosynthesis; L-leucine biosynthesis; L-leucine from 3-methyl-2-oxobutanoate: step 1/4. Functionally, catalyzes the condensation of the acetyl group of acetyl-CoA with 3-methyl-2-oxobutanoate (2-ketoisovalerate) to form 3-carboxy-3-hydroxy-4-methylpentanoate (2-isopropylmalate). The sequence is that of 2-isopropylmalate synthase from Thiobacillus denitrificans (strain ATCC 25259 / T1).